Reading from the N-terminus, the 670-residue chain is DNA ligase (670 aa).

Residues 31-35 (DAEYD), 76-77 (SL), and glutamate 108 each bind NAD(+). The active-site N6-AMP-lysine intermediate is lysine 110. Residues arginine 131, glutamate 166, lysine 271, and lysine 295 each coordinate NAD(+). Positions 388, 391, 406, and 412 each coordinate Zn(2+). A BRCT domain is found at 579–668 (NIGGSLSGKK…NTPALKKETS (90 aa)).

This sequence belongs to the NAD-dependent DNA ligase family. LigA subfamily. It depends on Mg(2+) as a cofactor. The cofactor is Mn(2+).

It catalyses the reaction NAD(+) + (deoxyribonucleotide)n-3'-hydroxyl + 5'-phospho-(deoxyribonucleotide)m = (deoxyribonucleotide)n+m + AMP + beta-nicotinamide D-nucleotide.. Functionally, DNA ligase that catalyzes the formation of phosphodiester linkages between 5'-phosphoryl and 3'-hydroxyl groups in double-stranded DNA using NAD as a coenzyme and as the energy source for the reaction. It is essential for DNA replication and repair of damaged DNA. This chain is DNA ligase, found in Neorickettsia sennetsu (strain ATCC VR-367 / Miyayama) (Ehrlichia sennetsu).